A 246-amino-acid polypeptide reads, in one-letter code: MQPQSKDPCQELHPLVSTLAASIRSSWQKLPELAPLCTADDLKAIHGELDGETLFIGNELYQCRGFRKIHLEIARLGNGLQILHCVWFPDPQYDLPIFGADIVAGPAGISAAIVDLSPTSGELPDPVFKGLEAIERPAFRQVRDLPGWGTIFSSKVCFIRPDGADEEALFNQVVIDYLEVLSDCASRANPESPTTVSTINRYEGQLNYCLQQKRNDKTRRVLEKAFDPEWADRYIELLLFDNPPTP.

This sequence belongs to the HY2 family.

The enzyme catalyses (2R,3Z)-phycocyanobilin + 4 oxidized [2Fe-2S]-[ferredoxin] = biliverdin IXalpha + 4 reduced [2Fe-2S]-[ferredoxin] + 4 H(+). Its function is as follows. Catalyzes the four-electron reduction of biliverdin IX-alpha (2-electron reduction at both the A and D rings); the reaction proceeds via an isolatable 2-electron intermediate, 181,182-dihydrobiliverdin. The sequence is that of Phycocyanobilin:ferredoxin oxidoreductase from Synechococcus sp. (strain CC9902).